The following is a 417-amino-acid chain: MLEQMGKAAREASWHLAQLSTEQKNQALLVIADLLEQQEAIILAANEKDMVAARESNINAAMLDRLLLTSERLKAIADDVRQVCHLEDPVGQVIDGRLLDSGLRLERRRVPLGVVGVIYEARPNVTIDVASLCLKTGNAAILRGGKETHHTNQAVVAVIQQALETCAIPAAAIQAIDKPDRELVAKMLKMDEYIDMLIPRGGAGLHKLCREQSTIPVITGGIGVCHTFVDESADLDQALNVIINAKVQRPSACNSLETLLVHEAIAESFLPQLSDAMAAQKVTLHASQRAITALKKGRATVVDVTEADYCDEWLSLDLNVEVVNDLTAAIAHIRQYGTAHSDAILTQSISHADRFVRQVDSAAVYVNASTRFTDGGQFGLGAEVAVSTQKLHARGPMGLDALTTYKWIGYGDNTLRR.

It belongs to the gamma-glutamyl phosphate reductase family.

It is found in the cytoplasm. It carries out the reaction L-glutamate 5-semialdehyde + phosphate + NADP(+) = L-glutamyl 5-phosphate + NADPH + H(+). Its pathway is amino-acid biosynthesis; L-proline biosynthesis; L-glutamate 5-semialdehyde from L-glutamate: step 2/2. Functionally, catalyzes the NADPH-dependent reduction of L-glutamate 5-phosphate into L-glutamate 5-semialdehyde and phosphate. The product spontaneously undergoes cyclization to form 1-pyrroline-5-carboxylate. The protein is Gamma-glutamyl phosphate reductase of Proteus mirabilis (strain HI4320).